The following is a 168-amino-acid chain: Xanthine-guanine phosphoribosyltransferase (168 aa).

5-phospho-alpha-D-ribose 1-diphosphate-binding positions include 43 to 44 (RG) and 102 to 110 (DDLVDTGAT). Asp103 lines the Mg(2+) pocket. Guanine-binding residues include Asp106 and Ile149. Positions 106 and 149 each coordinate xanthine. GMP is bound by residues 106–110 (DTGAT) and 148–149 (WI).

Belongs to the purine/pyrimidine phosphoribosyltransferase family. XGPT subfamily. Homotetramer. Mg(2+) is required as a cofactor.

The protein localises to the cell inner membrane. The catalysed reaction is GMP + diphosphate = guanine + 5-phospho-alpha-D-ribose 1-diphosphate. It catalyses the reaction XMP + diphosphate = xanthine + 5-phospho-alpha-D-ribose 1-diphosphate. The enzyme catalyses IMP + diphosphate = hypoxanthine + 5-phospho-alpha-D-ribose 1-diphosphate. It functions in the pathway purine metabolism; GMP biosynthesis via salvage pathway; GMP from guanine: step 1/1. The protein operates within purine metabolism; XMP biosynthesis via salvage pathway; XMP from xanthine: step 1/1. Its function is as follows. Purine salvage pathway enzyme that catalyzes the transfer of the ribosyl-5-phosphate group from 5-phospho-alpha-D-ribose 1-diphosphate (PRPP) to the N9 position of the 6-oxopurines guanine and xanthine to form the corresponding ribonucleotides GMP (guanosine 5'-monophosphate) and XMP (xanthosine 5'-monophosphate), with the release of PPi. To a lesser extent, also acts on hypoxanthine. In Nitrobacter winogradskyi (strain ATCC 25391 / DSM 10237 / CIP 104748 / NCIMB 11846 / Nb-255), this protein is Xanthine-guanine phosphoribosyltransferase.